The sequence spans 344 residues: Oxygen sensor histidine kinase NreB (344 aa).

Positions 58, 61, 73, and 76 each coordinate [4Fe-4S] cluster. One can recognise a Histidine kinase domain in the interval 147 to 344 (ENERKRISRE…GTIITLDIPI (198 aa)). Phosphohistidine; by autocatalysis is present on His158.

[4Fe-4S] cluster is required as a cofactor. In terms of processing, autophosphorylated.

Its subcellular location is the cytoplasm. The enzyme catalyses ATP + protein L-histidine = ADP + protein N-phospho-L-histidine.. Member of the two-component regulatory system NreB/NreC involved in the control of dissimilatory nitrate/nitrite reduction in response to oxygen. NreB functions as a direct oxygen sensor histidine kinase which is autophosphorylated, in the absence of oxygen, probably at the conserved histidine residue, and transfers its phosphate group probably to a conserved aspartate residue of NreC. NreB/NreC activates the expression of the nitrate (narGHJI) and nitrite (nir) reductase operons, as well as the putative nitrate transporter gene narT. The sequence is that of Oxygen sensor histidine kinase NreB (nreB) from Staphylococcus epidermidis (strain ATCC 35984 / DSM 28319 / BCRC 17069 / CCUG 31568 / BM 3577 / RP62A).